The sequence spans 516 residues: Acyl-lipid (7-3)-desaturase, chloroplastic (516 aa).

The tract at residues 1 to 25 (MNATMQRSAVAGRTSGKVATTARAS) is disordered. Residues 1–47 (MNATMQRSAVAGRTSGKVATTARASSMARPRLPIAGRVARRSAVTVR) constitute a chloroplast transit peptide. The Cytochrome b5 heme-binding domain occupies 83 to 148 (WTVYRGVAYD…LADFPVDAVP (66 aa)). Heme is bound by residues His100 and His123. A run of 2 helical transmembrane segments spans residues 186–206 (GAAFAVLGYAAAMYALYTYDA) and 209–229 (LTGALLGLGGAWIGLTIQHCG). The Histidine box-1 signature appears at 227-231 (HCGNH). The Histidine box-2 signature appears at 262 to 267 (HQVSHH). 4 consecutive transmembrane segments (helical) span residues 305–325 (MWALFPFLQLVFQIGDWQALL), 354–374 (FLLYGLPAFLHGPTAMLGGAA), 375–395 (GYLFTQSIVLAATFAVSHNVP), and 423–443 (VLTSANWGGVIGNFFTGGLNL). Residues 444 to 448 (QIEHH) carry the Histidine box-3 motif.

Belongs to the fatty acid desaturase type 1 family. Fe(2+) serves as cofactor.

It is found in the plastid. It localises to the chloroplast membrane. The enzyme catalyses a (7Z,10Z,13Z,16Z,19Z)-docosapentaenoyl-containing glycerolipid + 2 Fe(II)-[cytochrome b5] + O2 + 2 H(+) = a (4Z,7Z,10Z,13Z,16Z,19Z)-docosahexaenoyl-containing glycerolipid + 2 Fe(III)-[cytochrome b5] + 2 H2O. It carries out the reaction a (7Z,10Z,13Z,16Z)-docosatetraenoyl-containing glycerolipid + 2 Fe(II)-[cytochrome b5] + O2 + 2 H(+) = a (4Z,7Z,10Z,13Z,16Z)-docosapentaenoyl-containing glycerolipid + 2 Fe(III)-[cytochrome b5] + 2 H2O. In terms of biological role, fatty acid desaturase that introduces a cis double bond at the 4-position in 16-carbon polyunsaturated fatty acids that contain a Delta(7) double bond, resulting in the production of 16 carbon fatty acid (7Z,10Z,13Z)-hexadeca-7,10,13-trienoate. The polypeptide is Acyl-lipid (7-3)-desaturase, chloroplastic (Chlamydomonas reinhardtii (Chlamydomonas smithii)).